The sequence spans 289 residues: Pantothenate synthetase (289 aa).

Residue 30-37 (MGYLHKGH) coordinates ATP. Residue H37 is the Proton donor of the active site. Q61 provides a ligand contact to (R)-pantoate. Residue Q61 participates in beta-alanine binding. 147–150 (GEKD) serves as a coordination point for ATP. Q153 is a (R)-pantoate binding site. ATP contacts are provided by residues V176 and 184–187 (CSSR).

Belongs to the pantothenate synthetase family. In terms of assembly, homodimer.

The protein resides in the cytoplasm. It catalyses the reaction (R)-pantoate + beta-alanine + ATP = (R)-pantothenate + AMP + diphosphate + H(+). The protein operates within cofactor biosynthesis; (R)-pantothenate biosynthesis; (R)-pantothenate from (R)-pantoate and beta-alanine: step 1/1. Catalyzes the condensation of pantoate with beta-alanine in an ATP-dependent reaction via a pantoyl-adenylate intermediate. The polypeptide is Pantothenate synthetase (Brucella anthropi (strain ATCC 49188 / DSM 6882 / CCUG 24695 / JCM 21032 / LMG 3331 / NBRC 15819 / NCTC 12168 / Alc 37) (Ochrobactrum anthropi)).